Consider the following 253-residue polypeptide: Small ribosomal subunit protein uS2 (253 aa).

This sequence belongs to the universal ribosomal protein uS2 family.

The polypeptide is Small ribosomal subunit protein uS2 (Chlorobium luteolum (strain DSM 273 / BCRC 81028 / 2530) (Pelodictyon luteolum)).